The following is a 114-amino-acid chain: MASAPISMLAMLFTLSGLRAQSVAQPEDQVNVAEGNPLTVKCTYSVSGNPYLFWYVQYPNRGLQFLLKYITGDNLVKGSYGFEAEFNKSQTSFHLKKPSALVSDSALYFCAVRD.

The N-terminal stretch at 1-20 (MASAPISMLAMLFTLSGLRA) is a signal peptide. The region spanning 21–114 (QSVAQPEDQV…SALYFCAVRD (94 aa)) is the Ig-like domain. Cysteine 42 and cysteine 110 are joined by a disulfide. A glycan (N-linked (GlcNAc...) asparagine) is linked at asparagine 87.

In terms of assembly, alpha-beta TR is a heterodimer composed of an alpha and beta chain; disulfide-linked. The alpha-beta TR is associated with the transmembrane signaling CD3 coreceptor proteins to form the TR-CD3 (TcR or TCR). The assembly of alpha-beta TR heterodimers with CD3 occurs in the endoplasmic reticulum where a single alpha-beta TR heterodimer associates with one CD3D-CD3E heterodimer, one CD3G-CD3E heterodimer and one CD247 homodimer forming a stable octameric structure. CD3D-CD3E and CD3G-CD3E heterodimers preferentially associate with TR alpha and TR beta chains, respectively. The association of the CD247 homodimer is the last step of TcR assembly in the endoplasmic reticulum and is required for transport to the cell surface.

The protein localises to the cell membrane. V region of the variable domain of T cell receptor (TR) alpha chain that participates in the antigen recognition. Alpha-beta T cell receptors are antigen specific receptors which are essential to the immune response and are present on the cell surface of T lymphocytes. Recognize peptide-major histocompatibility (MH) (pMH) complexes that are displayed by antigen presenting cells (APC), a prerequisite for efficient T cell adaptive immunity against pathogens. Binding of alpha-beta TR to pMH complex initiates TR-CD3 clustering on the cell surface and intracellular activation of LCK that phosphorylates the ITAM motifs of CD3G, CD3D, CD3E and CD247 enabling the recruitment of ZAP70. In turn ZAP70 phosphorylates LAT, which recruits numerous signaling molecules to form the LAT signalosome. The LAT signalosome propagates signal branching to three major signaling pathways, the calcium, the mitogen-activated protein kinase (MAPK) kinase and the nuclear factor NF-kappa-B (NF-kB) pathways, leading to the mobilization of transcription factors that are critical for gene expression and essential for T cell growth and differentiation. The T cell repertoire is generated in the thymus, by V-(D)-J rearrangement. This repertoire is then shaped by intrathymic selection events to generate a peripheral T cell pool of self-MH restricted, non-autoaggressive T cells. Post-thymic interaction of alpha-beta TR with the pMH complexes shapes TR structural and functional avidity. The sequence is that of T cell receptor alpha variable 3 from Homo sapiens (Human).